The following is a 323-amino-acid chain: Coiled-coil domain-containing protein 160 (323 aa).

Residues 143–290 (SKLRLNLLNE…IKNELRTEKS (148 aa)) adopt a coiled-coil conformation.

Belongs to the CCDC160 family.

This is Coiled-coil domain-containing protein 160 (CCDC160) from Bos taurus (Bovine).